A 245-amino-acid chain; its full sequence is 1-(5-phosphoribosyl)-5-[(5-phosphoribosylamino)methylideneamino] imidazole-4-carboxamide isomerase 1 (245 aa).

Catalysis depends on Asp7, which acts as the Proton acceptor. Asp129 functions as the Proton donor in the catalytic mechanism.

This sequence belongs to the HisA/HisF family.

It is found in the cytoplasm. The enzyme catalyses 1-(5-phospho-beta-D-ribosyl)-5-[(5-phospho-beta-D-ribosylamino)methylideneamino]imidazole-4-carboxamide = 5-[(5-phospho-1-deoxy-D-ribulos-1-ylimino)methylamino]-1-(5-phospho-beta-D-ribosyl)imidazole-4-carboxamide. Its pathway is amino-acid biosynthesis; L-histidine biosynthesis; L-histidine from 5-phospho-alpha-D-ribose 1-diphosphate: step 4/9. The sequence is that of 1-(5-phosphoribosyl)-5-[(5-phosphoribosylamino)methylideneamino] imidazole-4-carboxamide isomerase 1 (hisA1) from Photorhabdus laumondii subsp. laumondii (strain DSM 15139 / CIP 105565 / TT01) (Photorhabdus luminescens subsp. laumondii).